The following is a 283-amino-acid chain: Pantothenate synthetase (283 aa).

Position 30–37 (30–37 (MGNLHDGH)) interacts with ATP. Residue His37 is the Proton donor of the active site. Residue Gln61 participates in (R)-pantoate binding. Gln61 lines the beta-alanine pocket. ATP is bound at residue 149-152 (GEKD). (R)-pantoate is bound at residue Gln155. ATP contacts are provided by residues Met178 and 186-189 (LSSR).

Belongs to the pantothenate synthetase family. In terms of assembly, homodimer.

The protein resides in the cytoplasm. The catalysed reaction is (R)-pantoate + beta-alanine + ATP = (R)-pantothenate + AMP + diphosphate + H(+). Its pathway is cofactor biosynthesis; (R)-pantothenate biosynthesis; (R)-pantothenate from (R)-pantoate and beta-alanine: step 1/1. With respect to regulation, activation requires a combination of a divalent cation, magnesium or manganese, and a monovalent cation, potassium or ammonium. Above the optimum concentration for activation, magnesium and manganese are rather inhibitory. Also activated by 2-mercaptoethanol, dithiothreitol, cysteine and glutathione. Inhibited by divalent cations (mercury, cobalt, zinc, copper, silver), chelating agents (EDTA, EGTA and o-phenanthroline), and analogs of beta-alanine (taurine, gamma-aminobutyrate, gamma-amino-beta-hydroxybutyrate). In terms of biological role, catalyzes the condensation of pantoate with beta-alanine in an ATP-dependent reaction via a pantoyl-adenylate intermediate. In Escherichia coli (strain K12), this protein is Pantothenate synthetase (panC).